Here is a 549-residue protein sequence, read N- to C-terminus: CTP synthase (549 aa).

Residues 1 to 267 (MAKFVFITGG…CREVLDVLQL (267 aa)) form an amidoligase domain region. Serine 13 contributes to the CTP binding site. Serine 13 contributes to the UTP binding site. Residues 14 to 19 (SIGKGI) and aspartate 71 each bind ATP. Mg(2+) contacts are provided by aspartate 71 and glutamate 141. CTP contacts are provided by residues 148–150 (DIE), 188–193 (KTKPTQ), and lysine 224. Residues 188-193 (KTKPTQ) and lysine 224 contribute to the UTP site. The Glutamine amidotransferase type-1 domain maps to 292-534 (KVALVGKYVQ…IEAAQQRLPD (243 aa)). Residue glycine 354 participates in L-glutamine binding. Cysteine 381 (nucleophile; for glutamine hydrolysis) is an active-site residue. L-glutamine-binding positions include 382–385 (LGMQ), glutamate 405, and arginine 462. Active-site residues include histidine 507 and glutamate 509.

The protein belongs to the CTP synthase family. In terms of assembly, homotetramer.

The enzyme catalyses UTP + L-glutamine + ATP + H2O = CTP + L-glutamate + ADP + phosphate + 2 H(+). The catalysed reaction is L-glutamine + H2O = L-glutamate + NH4(+). It catalyses the reaction UTP + NH4(+) + ATP = CTP + ADP + phosphate + 2 H(+). Its pathway is pyrimidine metabolism; CTP biosynthesis via de novo pathway; CTP from UDP: step 2/2. Allosterically activated by GTP, when glutamine is the substrate; GTP has no effect on the reaction when ammonia is the substrate. The allosteric effector GTP functions by stabilizing the protein conformation that binds the tetrahedral intermediate(s) formed during glutamine hydrolysis. Inhibited by the product CTP, via allosteric rather than competitive inhibition. Functionally, catalyzes the ATP-dependent amination of UTP to CTP with either L-glutamine or ammonia as the source of nitrogen. Regulates intracellular CTP levels through interactions with the four ribonucleotide triphosphates. The polypeptide is CTP synthase (Synechococcus sp. (strain CC9902)).